The primary structure comprises 609 residues: MSIIQARCIGNLTRRSIVNVMSRRFQSLGPNPQEVYTKISDTKDPKRDKFFQYSWGSWLKDNEKQRAKRTTRFSIEGATKLIANLIKEKSDGTVKSPISKNGSSILSHNILSKTIGNDTNVTIKSISSIHEGKHHRVYKISLSSDKQLVLRLPYRLESDVAISQKIKSEVATMDFLDLKLKLNVPKVLAYGPDRSNDLEHPFILMEYIEGDLLMKQWEPMSKDEETVKSVITPIADFHSKVISVEFNKFGSLYFDKDVASEHRLDAAYEGEENESLSGRWRIGPSVEKPFSKRKNKLSAKTVAQHNGPWKADEPLQLITSVTEIELENLKNRLALSQADAGSDLENQENLKKQITTFEHLKVMGPKLLNPKSKSIMNAEELFKPRLYVPDLDPMNAIINVNRDNEPYFLDFEYSTIKPFILSNYPPFVAYHGAKVYDLENDIPGYADMDEVEKQQYEFMFYKTRNERIWENDLNSRRHDLIAVASPHIKVLRSPYTQVLEYRNDQDYLYVEACIVQLQAMWEAYVANELCNSSDAKFPIEYSKEYLDKHTQALNQYQADIVSTPFAATDGWVPQDMFDQLLEQGILVEENGEYKVATEKVLKPEEGETQ.

A mitochondrion-targeting transit peptide spans Met1 to Arg24.

The protein belongs to the AIM9 family.

It localises to the mitochondrion. This is Altered inheritance of mitochondria protein 9, mitochondrial (AIM9) from Meyerozyma guilliermondii (strain ATCC 6260 / CBS 566 / DSM 6381 / JCM 1539 / NBRC 10279 / NRRL Y-324) (Yeast).